A 350-amino-acid chain; its full sequence is Dihydroorotate dehydrogenase (quinone) (350 aa).

FMN is bound by residues 67–71 (AGFDK) and glycine 91. Lysine 71 contacts substrate. 116–120 (NRMGL) provides a ligand contact to substrate. The FMN site is built by asparagine 144 and asparagine 177. Asparagine 177 provides a ligand contact to substrate. The Nucleophile role is filled by cysteine 180. Asparagine 182 provides a ligand contact to substrate. Residues lysine 213 and threonine 241 each coordinate FMN. 242 to 243 (NT) contributes to the substrate binding site. Positions 245 to 265 (TERPASLRSPNAVETGGLSGK) are disordered. Residues glycine 264, glycine 291, and 312–313 (YT) contribute to the FMN site.

It belongs to the dihydroorotate dehydrogenase family. Type 2 subfamily. In terms of assembly, monomer. It depends on FMN as a cofactor.

The protein resides in the cell membrane. It carries out the reaction (S)-dihydroorotate + a quinone = orotate + a quinol. It participates in pyrimidine metabolism; UMP biosynthesis via de novo pathway; orotate from (S)-dihydroorotate (quinone route): step 1/1. Functionally, catalyzes the conversion of dihydroorotate to orotate with quinone as electron acceptor. The polypeptide is Dihydroorotate dehydrogenase (quinone) (pyrD) (Haloarcula marismortui (strain ATCC 43049 / DSM 3752 / JCM 8966 / VKM B-1809) (Halobacterium marismortui)).